Here is a 330-residue protein sequence, read N- to C-terminus: GMP reductase (330 aa).

The active-site Thioimidate intermediate is Cys180. An NADP(+)-binding site is contributed by 209 to 232 (LIADGGIRHNGDIAKSVRFGASMV).

It belongs to the IMPDH/GMPR family. GuaC type 2 subfamily.

The enzyme catalyses IMP + NH4(+) + NADP(+) = GMP + NADPH + 2 H(+). Its function is as follows. Catalyzes the irreversible NADPH-dependent deamination of GMP to IMP. It functions in the conversion of nucleobase, nucleoside and nucleotide derivatives of G to A nucleotides, and in maintaining the intracellular balance of A and G nucleotides. The polypeptide is GMP reductase (Lactobacillus johnsonii (strain CNCM I-12250 / La1 / NCC 533)).